A 595-amino-acid chain; its full sequence is Elongation factor 4 (595 aa).

In terms of domain architecture, tr-type G spans 2-184 (ETIRNFSIIA…TITHNIPYPK (183 aa)). Residues 14-19 (DHGKST) and 131-134 (NKID) contribute to the GTP site.

This sequence belongs to the TRAFAC class translation factor GTPase superfamily. Classic translation factor GTPase family. LepA subfamily.

The protein resides in the cell membrane. It carries out the reaction GTP + H2O = GDP + phosphate + H(+). In terms of biological role, required for accurate and efficient protein synthesis under certain stress conditions. May act as a fidelity factor of the translation reaction, by catalyzing a one-codon backward translocation of tRNAs on improperly translocated ribosomes. Back-translocation proceeds from a post-translocation (POST) complex to a pre-translocation (PRE) complex, thus giving elongation factor G a second chance to translocate the tRNAs correctly. Binds to ribosomes in a GTP-dependent manner. This chain is Elongation factor 4, found in Buchnera aphidicola subsp. Baizongia pistaciae (strain Bp).